Here is a 293-residue protein sequence, read N- to C-terminus: Ribosomal protein L11 methyltransferase (293 aa).

S-adenosyl-L-methionine-binding residues include Thr145, Gly166, Asp188, and Asn230.

This sequence belongs to the methyltransferase superfamily. PrmA family.

The protein localises to the cytoplasm. It catalyses the reaction L-lysyl-[protein] + 3 S-adenosyl-L-methionine = N(6),N(6),N(6)-trimethyl-L-lysyl-[protein] + 3 S-adenosyl-L-homocysteine + 3 H(+). Methylates ribosomal protein L11. The sequence is that of Ribosomal protein L11 methyltransferase from Shewanella baltica (strain OS223).